We begin with the raw amino-acid sequence, 932 residues long: Protocadherin gamma-A3 (932 aa).

An N-terminal signal peptide occupies residues 1–29 (MTNCLSFRNGRGLALLCALLGTLCETGSG). 6 Cadherin domains span residues 30-133 (QIRY…APNF), 134-242 (PTEE…PPMF), 243-347 (TQPE…APEI), 348-452 (TITS…PPTF), 453-562 (PHLS…APEI), and 570-682 (DGST…EPSA). Over 30-692 (QIRYSVSEEL…KPNDSDLTLY (663 aa)) the chain is Extracellular. Asn265, Asn419, and Asn545 each carry an N-linked (GlcNAc...) asparagine glycan. Asn685 carries N-linked (GlcNAc...) asparagine glycosylation. The helical transmembrane segment at 693–713 (LVVAVAAVSCVFLAFVIVLLA) threads the bilayer. Residues 714–932 (LRLRRWHKSR…KKKSGKKEKK (219 aa)) are Cytoplasmic-facing. 2 disordered regions span residues 805–841 (NLLQ…WPNN) and 902–932 (ATLT…KEKK). Residues 922–932 (NKKKSGKKEKK) show a composition bias toward basic residues.

The protein resides in the cell membrane. Potential calcium-dependent cell-adhesion protein. May be involved in the establishment and maintenance of specific neuronal connections in the brain. The polypeptide is Protocadherin gamma-A3 (PCDHGA3) (Homo sapiens (Human)).